Consider the following 101-residue polypeptide: NADH-quinone oxidoreductase subunit K (101 aa).

3 helical membrane passes run 4 to 24 (LGHLLGLGAVLFCISLAGIFL), 30 to 50 (IVLLMSIELMLLSVNVNFIAF), and 62 to 82 (FVFFILTVAAAEAAIGLAILV).

The protein belongs to the complex I subunit 4L family. In terms of assembly, NDH-1 is composed of 14 different subunits. Subunits NuoA, H, J, K, L, M, N constitute the membrane sector of the complex.

It localises to the cell inner membrane. It carries out the reaction a quinone + NADH + 5 H(+)(in) = a quinol + NAD(+) + 4 H(+)(out). Its function is as follows. NDH-1 shuttles electrons from NADH, via FMN and iron-sulfur (Fe-S) centers, to quinones in the respiratory chain. The immediate electron acceptor for the enzyme in this species is believed to be ubiquinone. Couples the redox reaction to proton translocation (for every two electrons transferred, four hydrogen ions are translocated across the cytoplasmic membrane), and thus conserves the redox energy in a proton gradient. The sequence is that of NADH-quinone oxidoreductase subunit K from Xanthomonas axonopodis pv. citri (strain 306).